The chain runs to 292 residues: Small ribosomal subunit biogenesis GTPase RsgA (292 aa).

In terms of domain architecture, CP-type G spans 62–213 (KNSLVRPPIV…IADTPGFSSL (152 aa)). GTP contacts are provided by residues 111 to 114 (SKMD) and 156 to 164 (GQTGVGKST). Residues Cys237, Cys242, His244, and Cys250 each coordinate Zn(2+).

Belongs to the TRAFAC class YlqF/YawG GTPase family. RsgA subfamily. Monomer. Associates with 30S ribosomal subunit, binds 16S rRNA. Zn(2+) serves as cofactor.

The protein resides in the cytoplasm. In terms of biological role, one of several proteins that assist in the late maturation steps of the functional core of the 30S ribosomal subunit. Helps release RbfA from mature subunits. May play a role in the assembly of ribosomal proteins into the subunit. Circularly permuted GTPase that catalyzes slow GTP hydrolysis, GTPase activity is stimulated by the 30S ribosomal subunit. This Streptococcus pneumoniae serotype 4 (strain ATCC BAA-334 / TIGR4) protein is Small ribosomal subunit biogenesis GTPase RsgA.